We begin with the raw amino-acid sequence, 255 residues long: 4-hydroxy-tetrahydrodipicolinate reductase (255 aa).

NAD(+) contacts are provided by residues 9–14 (GFKGKM), Asp-35, 89–91 (GTT), and 115–118 (APNF). His-145 serves as the catalytic Proton donor/acceptor. His-146 contributes to the (S)-2,3,4,5-tetrahydrodipicolinate binding site. The active-site Proton donor is Lys-149. 155 to 156 (GT) contacts (S)-2,3,4,5-tetrahydrodipicolinate.

Belongs to the DapB family.

The protein localises to the cytoplasm. It carries out the reaction (S)-2,3,4,5-tetrahydrodipicolinate + NAD(+) + H2O = (2S,4S)-4-hydroxy-2,3,4,5-tetrahydrodipicolinate + NADH + H(+). The enzyme catalyses (S)-2,3,4,5-tetrahydrodipicolinate + NADP(+) + H2O = (2S,4S)-4-hydroxy-2,3,4,5-tetrahydrodipicolinate + NADPH + H(+). The protein operates within amino-acid biosynthesis; L-lysine biosynthesis via DAP pathway; (S)-tetrahydrodipicolinate from L-aspartate: step 4/4. Its function is as follows. Catalyzes the conversion of 4-hydroxy-tetrahydrodipicolinate (HTPA) to tetrahydrodipicolinate. The sequence is that of 4-hydroxy-tetrahydrodipicolinate reductase from Streptococcus pneumoniae serotype 19F (strain G54).